The following is a 425-amino-acid chain: Serine--tRNA ligase (425 aa).

229–231 (TSE) contributes to the L-serine binding site. ATP is bound by residues 259–261 (RKE) and Val-275. Glu-282 contributes to the L-serine binding site. 349–352 (EITS) contributes to the ATP binding site. L-serine is bound at residue Thr-384.

It belongs to the class-II aminoacyl-tRNA synthetase family. Type-1 seryl-tRNA synthetase subfamily. In terms of assembly, homodimer. The tRNA molecule binds across the dimer.

The protein localises to the cytoplasm. It catalyses the reaction tRNA(Ser) + L-serine + ATP = L-seryl-tRNA(Ser) + AMP + diphosphate + H(+). The enzyme catalyses tRNA(Sec) + L-serine + ATP = L-seryl-tRNA(Sec) + AMP + diphosphate + H(+). The protein operates within aminoacyl-tRNA biosynthesis; selenocysteinyl-tRNA(Sec) biosynthesis; L-seryl-tRNA(Sec) from L-serine and tRNA(Sec): step 1/1. Catalyzes the attachment of serine to tRNA(Ser). Is also able to aminoacylate tRNA(Sec) with serine, to form the misacylated tRNA L-seryl-tRNA(Sec), which will be further converted into selenocysteinyl-tRNA(Sec). This is Serine--tRNA ligase from Borreliella afzelii (strain PKo) (Borrelia afzelii).